We begin with the raw amino-acid sequence, 317 residues long: MEYLDFELPIKELEEQLEKCVIIGKESDVDVTPTCKEINKKLEQTKKDIYKNLTAWQRVQLSRHPNRPYTLDYIKAICGDTFLELHGDRGFKDDKAMVGGLGKINGQSFMIVGQQKGYNTKTRQYRNFGMANPEGYRKALRLMKMAEKFGIPVLTLVDTPGAYPGLEAEERGQGEAIARNIFEMVRLQVPIITIIVGEGASGGALGIGVGDRVYMLENTWYSVISPESCSSILWKSWEYKERAAEALKLTSSDMKKQKLVDDVIPEPLGGAHYDRETTFKTVADYITKGYNELKDLSTADLIAQRMDKYSNMGEYKE.

Positions 37–292 (EINKKLEQTK…ADYITKGYNE (256 aa)) constitute a CoA carboxyltransferase C-terminal domain.

This sequence belongs to the AccA family. As to quaternary structure, acetyl-CoA carboxylase is a heterohexamer composed of biotin carboxyl carrier protein (AccB), biotin carboxylase (AccC) and two subunits each of ACCase subunit alpha (AccA) and ACCase subunit beta (AccD).

Its subcellular location is the cytoplasm. The catalysed reaction is N(6)-carboxybiotinyl-L-lysyl-[protein] + acetyl-CoA = N(6)-biotinyl-L-lysyl-[protein] + malonyl-CoA. The protein operates within lipid metabolism; malonyl-CoA biosynthesis; malonyl-CoA from acetyl-CoA: step 1/1. Component of the acetyl coenzyme A carboxylase (ACC) complex. First, biotin carboxylase catalyzes the carboxylation of biotin on its carrier protein (BCCP) and then the CO(2) group is transferred by the carboxyltransferase to acetyl-CoA to form malonyl-CoA. The polypeptide is Acetyl-coenzyme A carboxylase carboxyl transferase subunit alpha (Flavobacterium johnsoniae (strain ATCC 17061 / DSM 2064 / JCM 8514 / BCRC 14874 / CCUG 350202 / NBRC 14942 / NCIMB 11054 / UW101) (Cytophaga johnsonae)).